The primary structure comprises 192 residues: Xanthine phosphoribosyltransferase (192 aa).

Positions 20 and 27 each coordinate xanthine. A128–A132 is a binding site for 5-phospho-alpha-D-ribose 1-diphosphate. K156 provides a ligand contact to xanthine.

It belongs to the purine/pyrimidine phosphoribosyltransferase family. Xpt subfamily. Homodimer.

The protein localises to the cytoplasm. The enzyme catalyses XMP + diphosphate = xanthine + 5-phospho-alpha-D-ribose 1-diphosphate. It participates in purine metabolism; XMP biosynthesis via salvage pathway; XMP from xanthine: step 1/1. Converts the preformed base xanthine, a product of nucleic acid breakdown, to xanthosine 5'-monophosphate (XMP), so it can be reused for RNA or DNA synthesis. In Lactobacillus acidophilus (strain ATCC 700396 / NCK56 / N2 / NCFM), this protein is Xanthine phosphoribosyltransferase.